An 844-amino-acid polypeptide reads, in one-letter code: Striatin-interacting proteins 2 (844 aa).

Residues 1–18 show a composition bias toward low complexity; it reads MDDPAAPGPAGSPANDNG. Positions 1-58 are disordered; the sequence is MDDPAAPGPAGSPANDNGNGNGNGNGNGNGGKGKPAVPKGRETFRNQRRESEGSVDCP. The span at 19-33 shows a compositional bias: gly residues; it reads NGNGNGNGNGNGGKG. A compositionally biased stretch (basic and acidic residues) spans 39-52; sequence KGRETFRNQRRESE. Phosphoserine occurs at positions 328, 339, and 364. Positions 331–355 are disordered; sequence SYTLDLGESQLAPPPSKLRGRRGSR. The segment at 370 to 422 is disordered; it reads ERDLFKTEEPATEEEEESAADGERTLDGELDLLEQDPLVPPPPSQTPLSTDRV. Residues 379-389 show a composition bias toward acidic residues; it reads PATEEEEESAA.

Belongs to the STRIP family. Part of the core of STRIPAK complexes composed of PP2A catalytic and scaffolding subunits, the striatins (PP2A regulatory subunits), the striatin-associated proteins MOB4, STRIP1 and STRIP2, PDCD10 and members of the STE20 kinases, such as STK24 and STK26. Interacts with CTTNBP2NL.

It is found in the cytoplasm. In terms of biological role, plays a role in the regulation of cell morphology and cytoskeletal organization. Required in the control of cell shape. Calmodulin-binding scaffolding protein which is the center of the striatin-interacting phosphatase and kinase (STRIPAK) complexes. STRIPAK complexes have critical roles in protein (de)phosphorylation and are regulators of multiple signaling pathways including Hippo, MAPK, nuclear receptor and cytoskeleton remodeling. Different types of STRIPAK complexes are involved in a variety of biological processes such as cell growth, differentiation, apoptosis, metabolism and immune regulation. The chain is Striatin-interacting proteins 2 (Strip2) from Mus musculus (Mouse).